The sequence spans 317 residues: Olfactory receptor 2F2 (317 aa).

The Extracellular segment spans residues 1–25 (MEIDNQTWVREFILLGLSSDWCTQI). N-linked (GlcNAc...) asparagine glycosylation occurs at Asn-5. The helical transmembrane segment at 26 to 49 (SLFSLFLVTYLMTVLGNCLIVLLI) threads the bilayer. The Cytoplasmic segment spans residues 50 to 57 (RLDSRLHT). The helical transmembrane segment at 58-79 (PMYFFLTNLSLVDVSYATSVVP) threads the bilayer. The Extracellular segment spans residues 80 to 100 (QLLAHFLAEHKAIPFQSCAAQ). Cys-97 and Cys-189 form a disulfide bridge. A helical transmembrane segment spans residues 101 to 120 (LFFSLALGGIEFVLLAVMAY). Residues 121-139 (DRHVAVSDRLRYSAIMHGG) lie on the Cytoplasmic side of the membrane. The chain crosses the membrane as a helical span at residues 140–158 (LCARLAITSWVSGSINSLV). The Extracellular portion of the chain corresponds to 159-195 (QTAITFQLPMCTNKFIDHISCELLAVVRLACVDTSSN). The chain crosses the membrane as a helical span at residues 196-219 (EAAIMVSSIVLLMTPFCLVLLSYI). At 220-236 (RIISTILKIQSREGRKK) the chain is on the cytoplasmic side. The helical transmembrane segment at 237 to 259 (AFHTCASHLTVVALCYGTTIFTY) threads the bilayer. The Extracellular segment spans residues 260–272 (IQPHSGPSVLQEK). Residues 273–292 (LISVFYAIVMPLLNPVIYSL) traverse the membrane as a helical segment. Residues 293–317 (RNKEVKGAWHKLLEKFSGLTSKLGT) lie on the Cytoplasmic side of the membrane.

Belongs to the G-protein coupled receptor 1 family.

It is found in the cell membrane. Its function is as follows. Odorant receptor. This is Olfactory receptor 2F2 (OR2F2) from Homo sapiens (Human).